Reading from the N-terminus, the 238-residue chain is MSSRSYKRVLLKLSGEALMGEDAFGINRSTIVRMTDEIAEVAALGVELAIVIGGGNIFRGVAPGAQGMDRATADYMGMMATIMNALALQDALKHKGVDTRVQSALNIDQVVEPYIRPKALRYLEEGKVVIFAAGTGNPFFTTDTAAALRGAEIGAEIVLKATKVDGIYSADPNKDPTATRYARISFDEAIVRRLEVMDATAFALCRDQKLPIKVFSINKFGALKRAVSGEDEGTLVHV.

12–15 (KLSG) provides a ligand contact to ATP. Residue Gly54 coordinates UMP. Positions 55 and 59 each coordinate ATP. UMP contacts are provided by residues Asp74 and 135-142 (TGNPFFTT). The ATP site is built by Thr162, Tyr168, and Asp171.

The protein belongs to the UMP kinase family. Homohexamer.

Its subcellular location is the cytoplasm. The enzyme catalyses UMP + ATP = UDP + ADP. It functions in the pathway pyrimidine metabolism; CTP biosynthesis via de novo pathway; UDP from UMP (UMPK route): step 1/1. With respect to regulation, inhibited by UTP. Its function is as follows. Catalyzes the reversible phosphorylation of UMP to UDP. The polypeptide is Uridylate kinase (Bordetella parapertussis (strain 12822 / ATCC BAA-587 / NCTC 13253)).